Reading from the N-terminus, the 348-residue chain is Centromere protein N (348 aa).

Belongs to the CENP-N/CHL4 family.

The protein localises to the nucleus. Its subcellular location is the chromosome. The protein resides in the centromere. Probable component of a centromeric complex involved in assembly of kinetochore proteins, mitotic progression and chromosome segregation. The chain is Centromere protein N (cenpn) from Xenopus tropicalis (Western clawed frog).